We begin with the raw amino-acid sequence, 340 residues long: Serine racemase (340 aa).

A Mg(2+)-binding site is contributed by E13. Residues S31, S32, I33, K51, and T52 each coordinate ATP. Catalysis depends on K56, which acts as the Proton acceptor. At K56 the chain carries N6-(pyridoxal phosphate)lysine. P69 and T81 together coordinate Ca(2+). Residue S84 is the Proton acceptor of the active site. N86 lines the pyridoxal 5'-phosphate pocket. Q89 lines the ATP pocket. C113 carries the S-nitrosocysteine modification. An ATP-binding site is contributed by Y121. N154 is a binding site for pyridoxal 5'-phosphate. D178 serves as a coordination point for Mg(2+). Positions 185, 186, 187, 188, and 189 each coordinate pyridoxal 5'-phosphate. Mg(2+) is bound by residues E210, A214, D216, and N247. Ca(2+) is bound by residues E210, A214, D216, and N247. The Mn(2+) site is built by E210, A214, and D216. K279 contacts ATP. S313 contacts pyridoxal 5'-phosphate. Position 316 (N316) interacts with ATP.

This sequence belongs to the serine/threonine dehydratase family. Homodimer. Mg(2+) serves as cofactor. Requires Mn(2+) as cofactor. It depends on Ca(2+) as a cofactor. Pyridoxal 5'-phosphate is required as a cofactor. Post-translationally, S-nitrosylated, leading to decrease the enzyme activity. In terms of tissue distribution, expressed in the cerebellum, hippocampus, dorsolateral prefrontal cortex, and in motor neurons and glial cells of the lumbar spinal cord (at protein level). Increased in the dorsolateral prefrontal cortex of schizophrenic patients (at protein level). Brain: expressed at high levels in hippocampus and corpus callosum, intermediate levels in substantia nigra and caudate, and low levels in amygdala, thalamus, and subthalamic nuclei. Expressed in heart, skeletal muscle, kidney, and liver.

It carries out the reaction L-serine = D-serine. It catalyses the reaction D-serine = pyruvate + NH4(+). The catalysed reaction is L-serine = pyruvate + NH4(+). Its activity is regulated as follows. Allosterically activated by magnesium, and possibly also other divalent metal cations. Allosterically activated by ATP, ADP or GTP. Competitively inhibited by malonate. Inhibited by meso-tartrate and malonate. In terms of biological role, catalyzes the synthesis of D-serine from L-serine. D-serine is a key coagonist with glutamate at NMDA receptors. Has dehydratase activity towards both L-serine and D-serine. The polypeptide is Serine racemase (SRR) (Homo sapiens (Human)).